The chain runs to 300 residues: Ribosomal RNA small subunit methyltransferase H (300 aa).

S-adenosyl-L-methionine-binding positions include 35–37 (GGH), aspartate 55, phenylalanine 82, aspartate 100, and glutamine 107.

Belongs to the methyltransferase superfamily. RsmH family.

The protein localises to the cytoplasm. It catalyses the reaction cytidine(1402) in 16S rRNA + S-adenosyl-L-methionine = N(4)-methylcytidine(1402) in 16S rRNA + S-adenosyl-L-homocysteine + H(+). Functionally, specifically methylates the N4 position of cytidine in position 1402 (C1402) of 16S rRNA. The polypeptide is Ribosomal RNA small subunit methyltransferase H (Chlamydia trachomatis serovar A (strain ATCC VR-571B / DSM 19440 / HAR-13)).